The chain runs to 231 residues: Flagellar L-ring protein 2 (231 aa).

A signal peptide spans 1 to 15 (MKNLILILPLLMLTG). Cys-16 carries the N-palmitoyl cysteine lipid modification. Cys-16 carries the S-diacylglycerol cysteine lipid modification. Residues 30-54 (SPVGSGLRTQADPIPVTPRMRTPVS) form a disordered region.

Belongs to the FlgH family. In terms of assembly, the basal body constitutes a major portion of the flagellar organelle and consists of four rings (L,P,S, and M) mounted on a central rod.

Its subcellular location is the cell outer membrane. It localises to the bacterial flagellum basal body. In terms of biological role, assembles around the rod to form the L-ring and probably protects the motor/basal body from shearing forces during rotation. This chain is Flagellar L-ring protein 2, found in Bradyrhizobium diazoefficiens (strain JCM 10833 / BCRC 13528 / IAM 13628 / NBRC 14792 / USDA 110).